We begin with the raw amino-acid sequence, 280 residues long: ATP synthase gamma chain (280 aa).

This sequence belongs to the ATPase gamma chain family. In terms of assembly, F-type ATPases have 2 components, CF(1) - the catalytic core - and CF(0) - the membrane proton channel. CF(1) has five subunits: alpha(3), beta(3), gamma(1), delta(1), epsilon(1). CF(0) has three main subunits: a, b and c.

Its subcellular location is the cell membrane. In terms of biological role, produces ATP from ADP in the presence of a proton gradient across the membrane. The gamma chain is believed to be important in regulating ATPase activity and the flow of protons through the CF(0) complex. The protein is ATP synthase gamma chain of Mycoplasma mycoides subsp. mycoides SC (strain CCUG 32753 / NCTC 10114 / PG1).